A 729-amino-acid chain; its full sequence is Fatty acid oxidation complex subunit alpha (729 aa).

Residues 1 to 189 (MLYKGDTLYL…KIGLVDGVVK (189 aa)) are enoyl-CoA hydratase/isomerase. Substrate is bound at residue D296. The segment at 311–729 (ETPKQAAVLG…ARAVGDLKTA (419 aa)) is 3-hydroxyacyl-CoA dehydrogenase. NAD(+)-binding positions include M324, D343, 400–402 (VVE), K407, and S429. The active-site For 3-hydroxyacyl-CoA dehydrogenase activity is H450. N453 provides a ligand contact to NAD(+). Residues N500 and Y660 each contribute to the substrate site.

It in the N-terminal section; belongs to the enoyl-CoA hydratase/isomerase family. This sequence in the C-terminal section; belongs to the 3-hydroxyacyl-CoA dehydrogenase family. Heterotetramer of two alpha chains (FadB) and two beta chains (FadA).

The catalysed reaction is a (3S)-3-hydroxyacyl-CoA + NAD(+) = a 3-oxoacyl-CoA + NADH + H(+). It catalyses the reaction a (3S)-3-hydroxyacyl-CoA = a (2E)-enoyl-CoA + H2O. It carries out the reaction a 4-saturated-(3S)-3-hydroxyacyl-CoA = a (3E)-enoyl-CoA + H2O. The enzyme catalyses (3S)-3-hydroxybutanoyl-CoA = (3R)-3-hydroxybutanoyl-CoA. The catalysed reaction is a (3Z)-enoyl-CoA = a 4-saturated (2E)-enoyl-CoA. It catalyses the reaction a (3E)-enoyl-CoA = a 4-saturated (2E)-enoyl-CoA. It participates in lipid metabolism; fatty acid beta-oxidation. In terms of biological role, involved in the aerobic and anaerobic degradation of long-chain fatty acids via beta-oxidation cycle. Catalyzes the formation of 3-oxoacyl-CoA from enoyl-CoA via L-3-hydroxyacyl-CoA. It can also use D-3-hydroxyacyl-CoA and cis-3-enoyl-CoA as substrate. This Escherichia fergusonii (strain ATCC 35469 / DSM 13698 / CCUG 18766 / IAM 14443 / JCM 21226 / LMG 7866 / NBRC 102419 / NCTC 12128 / CDC 0568-73) protein is Fatty acid oxidation complex subunit alpha.